We begin with the raw amino-acid sequence, 138 residues long: Basic phospholipase A2 BP-III (138 aa).

A signal peptide spans 1-16 (MRTLWIMAVLLVGVDG). Intrachain disulfides connect Cys-42–Cys-132, Cys-44–Cys-60, Cys-59–Cys-112, Cys-65–Cys-138, Cys-66–Cys-105, Cys-73–Cys-98, and Cys-91–Cys-103. The Ca(2+) site is built by Gly-45 and Gly-47. His-63 is a catalytic residue. Asp-106 is a catalytic residue.

This sequence belongs to the phospholipase A2 family. Group II subfamily. K49 sub-subfamily. Requires Ca(2+) as cofactor. In terms of tissue distribution, expressed by the venom gland.

It is found in the secreted. It catalyses the reaction a 1,2-diacyl-sn-glycero-3-phosphocholine + H2O = a 1-acyl-sn-glycero-3-phosphocholine + a fatty acid + H(+). In terms of biological role, snake venom phospholipase A2 (PLA2) that has low phospholipase A2 activity. Shows anticoagulant activities, strong myolytic activity, infiltration of polymorphonuclear cells, and edema in stromal tissues. Induces cell death of Jurkat cells in a concentration dependent manner. PLA2 catalyzes the calcium-dependent hydrolysis of the 2-acyl groups in 3-sn-phosphoglycerides. In Protobothrops flavoviridis (Habu), this protein is Basic phospholipase A2 BP-III.